The chain runs to 429 residues: Glycogenin-1 (429 aa).

5 residues coordinate UDP: leucine 8, threonine 10, asparagine 11, tyrosine 14, and arginine 76. Residues leucine 8, threonine 10, asparagine 11, tyrosine 14, arginine 76, lysine 85, aspartate 101, alanine 102, aspartate 103, asparagine 132, serine 133, aspartate 159, aspartate 162, and glutamine 163 each coordinate UDP-alpha-D-glucose. Aspartate 101, alanine 102, and aspartate 103 together coordinate UDP. Residue aspartate 101 coordinates Mn(2+). Aspartate 103 provides a ligand contact to Mn(2+). Tyrosine 194 carries an O-linked (Glc...) tyrosine glycan. 3 residues coordinate UDP: histidine 211, glycine 214, and lysine 217. Histidine 211 contributes to the Mn(2+) binding site. The UDP-alpha-D-glucose site is built by glycine 214 and lysine 217. Disordered stretches follow at residues 254–274 and 300–338; these read VFPSHHHTPEHRSHSADHPKI and SYDTDANTSDSHRNNEPHKHDQQREEHHELPHNKFQTPH. Composition is skewed to basic and acidic residues over residues 263–274 and 309–338; these read EHRSHSADHPKI and DSHRNNEPHKHDQQREEHHELPHNKFQTPH.

It belongs to the glycosyltransferase 8 family. Glycogenin subfamily. As to quaternary structure, forms a heterooctamer with one molecule of gyg-1 bound to each protomer of the gys-1 homotetramer. The N-terminus of gys-1 is involved in interprotomer contacts with gyg-1. The interaction with gys-1 is required for glycogen production but is not required for gys-1 intrinsic activity. Mn(2+) serves as cofactor. Self-glycosylated by the transfer of glucose residues from UDP-glucose to itself, forming an alpha-1,4-glycan of around 10 residues attached to Tyr-194.

The protein resides in the cytoplasm. Its subcellular location is the nucleus. The catalysed reaction is L-tyrosyl-[glycogenin] + UDP-alpha-D-glucose = alpha-D-glucosyl-L-tyrosyl-[glycogenin] + UDP + H(+). It catalyses the reaction [1,4-alpha-D-glucosyl](n)-L-tyrosyl-[glycogenin] + UDP-alpha-D-glucose = [1,4-alpha-D-glucosyl](n+1)-L-tyrosyl-[glycogenin] + UDP + H(+). Its pathway is glycan biosynthesis; glycogen biosynthesis. Functionally, self-glucosylating initiator of glycogen synthesis. It catalyzes the formation of a short alpha (1,4)-glucosyl chain covalently attached via a glucose 1-O-tyrosyl linkage to internal tyrosine residues and these chains act as primers for the elongation reaction catalyzed by glycogen synthase. This Caenorhabditis elegans protein is Glycogenin-1.